The primary structure comprises 242 residues: Ditrans,polycis-undecaprenyl-diphosphate synthase ((2E,6E)-farnesyl-diphosphate specific) (242 aa).

Residue Asp21 is part of the active site. Asp21 provides a ligand contact to Mg(2+). Substrate is bound by residues 22 to 25, Trp26, Arg34, His38, and 66 to 68; these read GNGR and SSE. Residue Asn69 is the Proton acceptor of the active site. Substrate-binding positions include Trp70, Arg72, Arg189, and 195-197; that span reads RIS. Position 208 (Glu208) interacts with Mg(2+).

The protein belongs to the UPP synthase family. In terms of assembly, homodimer. Mg(2+) is required as a cofactor.

The catalysed reaction is 8 isopentenyl diphosphate + (2E,6E)-farnesyl diphosphate = di-trans,octa-cis-undecaprenyl diphosphate + 8 diphosphate. Functionally, catalyzes the sequential condensation of isopentenyl diphosphate (IPP) with (2E,6E)-farnesyl diphosphate (E,E-FPP) to yield (2Z,6Z,10Z,14Z,18Z,22Z,26Z,30Z,34E,38E)-undecaprenyl diphosphate (di-trans,octa-cis-UPP). UPP is the precursor of glycosyl carrier lipid in the biosynthesis of bacterial cell wall polysaccharide components such as peptidoglycan and lipopolysaccharide. This is Ditrans,polycis-undecaprenyl-diphosphate synthase ((2E,6E)-farnesyl-diphosphate specific) from Haemophilus ducreyi (strain 35000HP / ATCC 700724).